Here is a 258-residue protein sequence, read N- to C-terminus: Spindlin-2B (258 aa).

Over residues 1–23 (MKTPNAQEAEGQQTRAAAGRATG) the composition is skewed to low complexity. Residues 1 to 49 (MKTPNAQEAEGQQTRAAAGRATGSANMTKKKVSQKKQRGRPSSQPRRNI) form a disordered region. Residues 28-39 (TKKKVSQKKQRG) show a composition bias toward basic residues. 3 tudor-like domain regions span residues 50-99 (VGCR…LELH), 129-178 (IGKA…YQLL), and 210-255 (IGKH…YDLV). 2 histone H3K4me3 and H3R8me2a binding regions span residues Glu138 and 246–248 (DFH).

Belongs to the SPIN/STSY family. Interacts with C11orf84/SPINDOC. In terms of tissue distribution, detected in all the examined tissues with highest expression in liver, followed by heart, stomach, kidney, skeletal muscle, placenta, and pancreas.

It is found in the nucleus. Functionally, involved in the regulation of cell cycle progression, this activity is related to the inhibition of apoptosis following the removal of essential growth factors. Exhibits H3K4me3-binding activity. The sequence is that of Spindlin-2B (SPIN2B) from Homo sapiens (Human).